A 309-amino-acid polypeptide reads, in one-letter code: Homoserine kinase (309 aa).

An ATP-binding site is contributed by 88–98; it reads PLARGLGSSAA.

It belongs to the GHMP kinase family. Homoserine kinase subfamily.

It is found in the cytoplasm. The enzyme catalyses L-homoserine + ATP = O-phospho-L-homoserine + ADP + H(+). It participates in amino-acid biosynthesis; L-threonine biosynthesis; L-threonine from L-aspartate: step 4/5. Its function is as follows. Catalyzes the ATP-dependent phosphorylation of L-homoserine to L-homoserine phosphate. The chain is Homoserine kinase from Halalkalibacterium halodurans (strain ATCC BAA-125 / DSM 18197 / FERM 7344 / JCM 9153 / C-125) (Bacillus halodurans).